Here is a 468-residue protein sequence, read N- to C-terminus: Sulfate adenylyltransferase subunit 1 (468 aa).

A tr-type G domain is found at 22 to 239 (KELLRFLTCG…TVEIASDKNA (218 aa)). The tract at residues 31 to 38 (GSVDDGKS) is G1. Position 31–38 (31–38 (GSVDDGKS)) interacts with GTP. The interval 89–93 (GITID) is G2. The interval 110-113 (DTPG) is G3. GTP-binding positions include 110–114 (DTPGH) and 165–168 (NKMD). The tract at residues 165–168 (NKMD) is G4. Residues 202-204 (SAL) are G5.

The protein belongs to the TRAFAC class translation factor GTPase superfamily. Classic translation factor GTPase family. CysN/NodQ subfamily. As to quaternary structure, heterodimer composed of CysD, the smaller subunit, and CysN.

It carries out the reaction sulfate + ATP + H(+) = adenosine 5'-phosphosulfate + diphosphate. The protein operates within sulfur metabolism; hydrogen sulfide biosynthesis; sulfite from sulfate: step 1/3. With CysD forms the ATP sulfurylase (ATPS) that catalyzes the adenylation of sulfate producing adenosine 5'-phosphosulfate (APS) and diphosphate, the first enzymatic step in sulfur assimilation pathway. APS synthesis involves the formation of a high-energy phosphoric-sulfuric acid anhydride bond driven by GTP hydrolysis by CysN coupled to ATP hydrolysis by CysD. This Teredinibacter turnerae (strain ATCC 39867 / T7901) protein is Sulfate adenylyltransferase subunit 1.